A 169-amino-acid polypeptide reads, in one-letter code: Sorting nexin-24 (169 aa).

Methionine 1 is subject to N-acetylmethionine. Residues 1–125 (MEVYIPSFRY…SFDETESEES (125 aa)) form the PX domain. A 1,2-diacyl-sn-glycero-3-phospho-(1D-myo-inositol-3-phosphate) contacts are provided by arginine 38, serine 40, lysine 61, and arginine 74. Serine 113 and serine 116 each carry phosphoserine.

Belongs to the sorting nexin family.

It is found in the cytoplasmic vesicle membrane. Its function is as follows. May be involved in several stages of intracellular trafficking. This is Sorting nexin-24 (SNX24) from Homo sapiens (Human).